Reading from the N-terminus, the 436-residue chain is Amino acid transporter AVT3C (436 aa).

Residues 1–13 (MGFQNEASSSSYT) are compositionally biased toward polar residues. The tract at residues 1-21 (MGFQNEASSSSYTLKIPPPAR) is disordered. At 1 to 38 (MGFQNEASSSSYTLKIPPPAREDSPLLGKGPPLSSQFK) the chain is on the cytoplasmic side. The helical transmembrane segment at 39-59 (TFANVFIAVVGAGVLGLPYAF) threads the bilayer. Topologically, residues 60 to 65 (KRTGWL) are vacuolar. The chain crosses the membrane as a helical span at residues 66–86 (MGVLLLVSVSVLTHHCMMLLV). Topologically, residues 87-118 (YTRRKLDSFNAGISKIGSFGDLGFAVCGSLGR) are cytoplasmic. Residues 119–139 (IVVDLFIILSQAGFCVGYLIF) form a helical membrane-spanning segment. Residues 140 to 166 (IGTTLANLSDPESPTSLRHQFTRLGSE) are Vacuolar-facing. Residues 167 to 187 (FLGVSSKSLYIWGCFPFQLGL) traverse the membrane as a helical segment. At 188-195 (NSIKTLTH) the chain is on the cytoplasmic side. A helical membrane pass occupies residues 196-216 (LAPLSIFADIVDLGAMAVVIV). Over 217–228 (EDSMIILKQRPD) the chain is Vacuolar. A helical membrane pass occupies residues 229-249 (VVAFGGMSLFLYGMGVAVYSF). The Cytoplasmic segment spans residues 250 to 273 (EGVGMVLPLESEMKDKDKFGKVLA). Residues 274-294 (LGMGFISLIYIAFGILGYLAF) traverse the membrane as a helical segment. The Vacuolar segment spans residues 295-309 (GEDTMDIITANLGAG). The chain crosses the membrane as a helical span at residues 310–330 (LVSTVVQLGLCINLFFTFPLM). Residues 331–352 (MNPVFEIVERRFSRGMYSAWLR) lie on the Cytoplasmic side of the membrane. Residues 353 to 373 (WVLVLAVTLVALFVPNFADFL) traverse the membrane as a helical segment. Residues 374–376 (SLV) lie on the Vacuolar side of the membrane. The chain crosses the membrane as a helical span at residues 377–397 (GSSTCCVLGFVLPALFHLLVF). Over 398-411 (KEEMGWLQWSSDTA) the chain is Cytoplasmic. A helical transmembrane segment spans residues 412–432 (IVVLGVVLAVSGTWSSLSEIF). Over 433-436 (SVKV) the chain is Vacuolar.

Belongs to the amino acid/polyamine transporter 2 family. Amino acid/auxin permease (AAAP) (TC 2.A.18.8) subfamily. As to expression, ubiquitous.

Its subcellular location is the vacuole membrane. Its function is as follows. Translocates preferentially neutral amino acids from the vacuole to the cytoplasm. The protein is Amino acid transporter AVT3C of Arabidopsis thaliana (Mouse-ear cress).